Consider the following 120-residue polypeptide: Large ribosomal subunit protein bL12 (120 aa).

It belongs to the bacterial ribosomal protein bL12 family. As to quaternary structure, homodimer. Part of the ribosomal stalk of the 50S ribosomal subunit. Forms a multimeric L10(L12)X complex, where L10 forms an elongated spine to which 2 to 4 L12 dimers bind in a sequential fashion. Binds GTP-bound translation factors.

Forms part of the ribosomal stalk which helps the ribosome interact with GTP-bound translation factors. Is thus essential for accurate translation. The protein is Large ribosomal subunit protein bL12 of Clostridium botulinum (strain Alaska E43 / Type E3).